The sequence spans 838 residues: Translation initiation factor IF-2 (838 aa).

The interval 1–235 is disordered; that stretch reads MSDTDGKKPL…RSLAAMKREQ (235 aa). A compositionally biased stretch (polar residues) spans 18–27; sequence SGQVKQSFSH. Over residues 50–60 the composition is skewed to low complexity; sequence SGSSTTTSSPS. Residues 88 to 156 show a composition bias toward basic and acidic residues; that stretch reads KLREVDDAKR…AARRAEEAKR (69 aa). The segment covering 162–177 has biased composition (low complexity); sequence PAAAQPDAADSRASAP. The segment covering 187 to 208 has biased composition (basic and acidic residues); the sequence is SRKEREREADRDRTTKKDDSRR. The tr-type G domain maps to 335–509; sequence PRPPIITIMG…ELLDLRANPK (175 aa). The tract at residues 344–351 is G1; sequence GHVDHGKT. Residue 344 to 351 coordinates GTP; that stretch reads GHVDHGKT. A G2 region spans residues 369–373; the sequence is GITQH. The interval 391–394 is G3; the sequence is DTPG. Residues 391–395 and 445–448 each bind GTP; these read DTPGH and NKID. The segment at 445-448 is G4; sequence NKID. The G5 stretch occupies residues 481-483; the sequence is SAK.

The protein belongs to the TRAFAC class translation factor GTPase superfamily. Classic translation factor GTPase family. IF-2 subfamily.

The protein resides in the cytoplasm. Its function is as follows. One of the essential components for the initiation of protein synthesis. Protects formylmethionyl-tRNA from spontaneous hydrolysis and promotes its binding to the 30S ribosomal subunits. Also involved in the hydrolysis of GTP during the formation of the 70S ribosomal complex. The sequence is that of Translation initiation factor IF-2 from Cereibacter sphaeroides (strain ATCC 17025 / ATH 2.4.3) (Rhodobacter sphaeroides).